A 286-amino-acid polypeptide reads, in one-letter code: ATP synthase gamma chain (286 aa).

The protein belongs to the ATPase gamma chain family. F-type ATPases have 2 components, CF(1) - the catalytic core - and CF(0) - the membrane proton channel. CF(1) has five subunits: alpha(3), beta(3), gamma(1), delta(1), epsilon(1). CF(0) has three main subunits: a, b and c.

It localises to the cell membrane. Its function is as follows. Produces ATP from ADP in the presence of a proton gradient across the membrane. The gamma chain is believed to be important in regulating ATPase activity and the flow of protons through the CF(0) complex. The protein is ATP synthase gamma chain of Ureaplasma parvum serovar 3 (strain ATCC 27815 / 27 / NCTC 11736).